We begin with the raw amino-acid sequence, 385 residues long: Acetate kinase (385 aa).

Asparagine 9 contributes to the Mg(2+) binding site. Lysine 16 contributes to the ATP binding site. Arginine 87 is a substrate binding site. Catalysis depends on aspartate 144, which acts as the Proton donor/acceptor. ATP is bound by residues 202 to 206 and 277 to 279; these read HLGSG and DIR. Glutamate 373 lines the Mg(2+) pocket.

Belongs to the acetokinase family. Homodimer. The cofactor is Mg(2+). It depends on Mn(2+) as a cofactor.

It localises to the cytoplasm. It carries out the reaction acetate + ATP = acetyl phosphate + ADP. The protein operates within metabolic intermediate biosynthesis; acetyl-CoA biosynthesis; acetyl-CoA from acetate: step 1/2. Its function is as follows. Catalyzes the formation of acetyl phosphate from acetate and ATP. Can also catalyze the reverse reaction. The chain is Acetate kinase from Rickettsia akari (strain Hartford).